The sequence spans 230 residues: Germin-like protein 5-1 (230 aa).

The signal sequence occupies residues Met1–Gly20. Cys38 and Cys53 are disulfide-bonded. A Cupin type-1 domain is found at Tyr86–Asp219. Residues His119, His121, Glu126, and His167 each coordinate Mn(2+). A glycan (N-linked (GlcNAc...) asparagine) is linked at Asn172.

It belongs to the germin family. As to quaternary structure, oligomer (believed to be a pentamer but probably hexamer).

Its subcellular location is the secreted. It is found in the extracellular space. The protein localises to the apoplast. Its function is as follows. May play a role in plant defense. Probably has no oxalate oxidase activity even if the active site is conserved. This Oryza sativa subsp. japonica (Rice) protein is Germin-like protein 5-1.